The primary structure comprises 333 residues: PRKC apoptosis WT1 regulator protein (333 aa).

Composition is skewed to low complexity over residues 1–14 (MATGGYRSGGSTTT), 33–51 (PAGPGSSGGDPAAKSPAGS), 66–80 (GPAGAAAPAAPAPGA), and 105–116 (PSAAAASGAPGS). Residues 1 to 262 (MATGGYRSGG…ASFSSSSTLE (262 aa)) are disordered. Residues 62 to 66 (ELNHG) carry the B30.2/SPRY domain-binding motif motif. A Nuclear localization signal motif is present at residues 138–154 (RKGKGQIEKRKLREKRR). Residues 138 to 196 (RKGKGQIEKRKLREKRRSTGVVNIPAAECLDEYEDDEAGQKERKREDAITQQNTIQNEA) form a selective for apoptosis induction in cancer cells (SAC) region. Residue Thr156 is modified to Phosphothreonine; by PKA. Residues 175–185 (AGQKERKREDA) show a composition bias toward basic and acidic residues. The segment covering 186–196 (ITQQNTIQNEA) has biased composition (polar residues). Ser224 carries the phosphoserine modification. The span at 235 to 248 (PRTDRSGFSRHNRD) shows a compositional bias: basic and acidic residues. A coiled-coil region spans residues 255–333 (FSSSSTLEKR…LLKVVGQLTR (79 aa)). The leucine-zipper stretch occupies residues 293-333 (IGKLKEEIDLLNRDLDDMEDENEQLKQENKTLLKVVGQLTR).

As to quaternary structure, homooligomer. Interacts (via the C-terminal region) with WT1. Interacts with THAP1. Interacts with AATF. Interacts with BACE1. Interacts with SPSB1 (via B30.2/SPRY domain); this interaction is direct and occurs in association with the Elongin BC complex. Interacts with SPSB2 (via B30.2/SPRY domain); this interaction occurs in association with the Elongin BC complex. Interacts with SPSB4 (via B30.2/SPRY domain); this interaction occurs in association with the Elongin BC complex. Component of a ternary complex composed of SQSTM1 and PRKCZ. Interacts with actin. Post-translationally, preferentially phosphorylated at the Thr-156 by PKC in cancer cells.

Its subcellular location is the cytoplasm. The protein resides in the nucleus. Functionally, pro-apoptotic protein capable of selectively inducing apoptosis in cancer cells, sensitizing the cells to diverse apoptotic stimuli and causing regression of tumors in animal models. Induces apoptosis in certain cancer cells by activation of the Fas prodeath pathway and coparallel inhibition of NF-kappa-B transcriptional activity. Inhibits the transcriptional activation and augments the transcriptional repression mediated by WT1. Down-regulates the anti-apoptotic protein BCL2 via its interaction with WT1. Also seems to be a transcriptional repressor by itself. May be directly involved in regulating the amyloid precursor protein (APP) cleavage activity of BACE1. The protein is PRKC apoptosis WT1 regulator protein (Pawr) of Mus musculus (Mouse).